The primary structure comprises 142 residues: Large ribosomal subunit protein uL13 (142 aa).

Belongs to the universal ribosomal protein uL13 family. As to quaternary structure, part of the 50S ribosomal subunit.

In terms of biological role, this protein is one of the early assembly proteins of the 50S ribosomal subunit, although it is not seen to bind rRNA by itself. It is important during the early stages of 50S assembly. The protein is Large ribosomal subunit protein uL13 of Pseudoalteromonas atlantica (strain T6c / ATCC BAA-1087).